The chain runs to 608 residues: Glutamine--fructose-6-phosphate aminotransferase [isomerizing] (608 aa).

The active-site Nucleophile; for GATase activity is the Cys2. The Glutamine amidotransferase type-2 domain maps to 2–217 (CGIVGIVGHK…DGDWAVVGKT (216 aa)). SIS domains lie at 283–422 (TDID…ARGT) and 456–598 (LSRE…VDQP). The For Fru-6P isomerization activity role is filled by Lys603.

It is found in the cytoplasm. It catalyses the reaction D-fructose 6-phosphate + L-glutamine = D-glucosamine 6-phosphate + L-glutamate. Involved in the production of the root hair deformation (HAD) factor specifically on medicago. This chain is Glutamine--fructose-6-phosphate aminotransferase [isomerizing] (nodM), found in Rhizobium leguminosarum bv. viciae.